We begin with the raw amino-acid sequence, 210 residues long: FMN-dependent NADH:quinone oxidoreductase (210 aa).

Residues 17 to 19 and 148 to 151 each bind FMN; these read SCS and SSGG.

This sequence belongs to the azoreductase type 1 family. Homodimer. The cofactor is FMN.

The catalysed reaction is 2 a quinone + NADH + H(+) = 2 a 1,4-benzosemiquinone + NAD(+). It catalyses the reaction N,N-dimethyl-1,4-phenylenediamine + anthranilate + 2 NAD(+) = 2-(4-dimethylaminophenyl)diazenylbenzoate + 2 NADH + 2 H(+). Functionally, quinone reductase that provides resistance to thiol-specific stress caused by electrophilic quinones. In terms of biological role, also exhibits azoreductase activity. Catalyzes the reductive cleavage of the azo bond in aromatic azo compounds to the corresponding amines. This is FMN-dependent NADH:quinone oxidoreductase from Geotalea uraniireducens (strain Rf4) (Geobacter uraniireducens).